Reading from the N-terminus, the 416-residue chain is Tryptophan synthase beta chain (416 aa).

Lysine 109 carries the N6-(pyridoxal phosphate)lysine modification.

Belongs to the TrpB family. Tetramer of two alpha and two beta chains. Pyridoxal 5'-phosphate serves as cofactor.

It carries out the reaction (1S,2R)-1-C-(indol-3-yl)glycerol 3-phosphate + L-serine = D-glyceraldehyde 3-phosphate + L-tryptophan + H2O. Its pathway is amino-acid biosynthesis; L-tryptophan biosynthesis; L-tryptophan from chorismate: step 5/5. Functionally, the beta subunit is responsible for the synthesis of L-tryptophan from indole and L-serine. The chain is Tryptophan synthase beta chain from Synechococcus sp. (strain WH7803).